Here is a 176-residue protein sequence, read N- to C-terminus: Lipoprotein signal peptidase (176 aa).

A run of 3 helical transmembrane segments spans residues 12–32 (WYWMVVLVFIADQLSKQWVLA), 67–87 (WQRWFFTFVAVGFSTLLTIWL), and 94–116 (MWRLNLAYTLVIGGALGNLIDRL). Catalysis depends on residues aspartate 123 and aspartate 141. The chain crosses the membrane as a helical span at residues 137-157 (FNIADSAICVGAALIIIDSII).

It belongs to the peptidase A8 family.

It localises to the cell inner membrane. The enzyme catalyses Release of signal peptides from bacterial membrane prolipoproteins. Hydrolyzes -Xaa-Yaa-Zaa-|-(S,diacylglyceryl)Cys-, in which Xaa is hydrophobic (preferably Leu), and Yaa (Ala or Ser) and Zaa (Gly or Ala) have small, neutral side chains.. Its pathway is protein modification; lipoprotein biosynthesis (signal peptide cleavage). Functionally, this protein specifically catalyzes the removal of signal peptides from prolipoproteins. The chain is Lipoprotein signal peptidase from Shewanella woodyi (strain ATCC 51908 / MS32).